Here is a 260-residue protein sequence, read N- to C-terminus: HTH-type transcriptional repressor NanR (260 aa).

Residues 1–21 (MSAFDHSSDDTQETIGNSLRR) form a disordered region. One can recognise an HTH gntR-type domain in the interval 27–95 (KKLSEMVEEE…NGERARVSRP (69 aa)). The H-T-H motif DNA-binding region spans 55-74 (ERELMAFFNVGRPSVREALA).

Belongs to the NanR family.

Its function is as follows. Transcriptional repressor that controls expression of the genes required for the catabolism of sialic acids. This is HTH-type transcriptional repressor NanR from Klebsiella aerogenes (strain ATCC 13048 / DSM 30053 / CCUG 1429 / JCM 1235 / KCTC 2190 / NBRC 13534 / NCIMB 10102 / NCTC 10006 / CDC 819-56) (Enterobacter aerogenes).